We begin with the raw amino-acid sequence, 491 residues long: MRNQGLGSWPVRRARMSPHATAVRHGGTALTYAELSRRVARLANGLRAAGVRPGDRVAYLGPNHPAYLETLFACGQAGAVFVPLNFRLGVPELDHALADSGASVLIHTPEHAETVAALAAGRLLRVPAGELDAADDEPPDLPVGLDDVCLLMYTSGSTGRPKGAMLTHGNLTWNCVNVLVETDLASDERALVAAPLFHAAALGMVCLPTLLKGGTVILHSAFDPGAVLSAVEQERVTLVFGVPTMYQAIAAHPRWRSADLSSLRTLLCGGAPVPADLASRYLDRGLAFVQGYGMTEAAPGVLVLDRAHVAEKIGSAGVPSFFTDVRLAGPSGEPVPPGEKGEIVVSGPNVMKGYWGRPEATAEVLRDGWFHSGDVATVDGDGYFHVVDRLKDMIISGGENIYPAEVENELYGYPGVEACAVIGVPDPRWGEVGKAVVVPADGSRIDGDELLAWLRTRLAGYKVPKSVEFTDRLPTTGSGKILKGEVRRRFG.

Residue T154 coordinates Mg(2+). ATP is bound by residues A199, G291, and T295. Position 296 (E296) interacts with Mg(2+). Residues D374 and K391 each contribute to the ATP site.

This sequence belongs to the ATP-dependent AMP-binding enzyme family. The cofactor is Mg(2+).

The enzyme catalyses (E)-ferulate + ATP + CoA = (E)-feruloyl-CoA + AMP + diphosphate. Catalyzes the formation of (E)-feruloyl-CoA, AMP and diphosphate from (E)-ferulate, CoA and ATP. Involved in the degradation pathway of lignin-derived aromatic compounds of plant cell walls. Catalyzes the first enzymatic step in the conversion of ferulic acid into high value compound vanillin. This chain is Feruloyl-CoA synthase, found in Amycolatopsis sp.